The chain runs to 230 residues: MALTGDLKSFSFADILQVLHHDKKSGVLIVEWPDITVAYYIKDGELVLARPVDKVFRVYVDRDFEKLIEKLRLNERTMAETIKKFFLSRLENKDGIFSFTQGFINYPENVPVAFPAEELIMEAARHLTLEETERKISDELLVFEKAPDWEVKVQRANLKEEERKVLELVNGENTVKDILEKSGLDKLTVYRTLYGLLAIGAIRRKRKKEIRKPTISLDLLTKLIEKIKKL.

This is an uncharacterized protein from Aquifex aeolicus (strain VF5).